The chain runs to 149 residues: Calmodulin (149 aa).

Ala-2 carries the N-acetylalanine modification. EF-hand domains lie at 8 to 43 (EQIS…LGQN), 44 to 79 (PTEA…KLKD), 81 to 116 (DTEE…LGEK), and 117 to 149 (LTNE…MIAK). 20 residues coordinate Ca(2+): Asp-21, Asp-23, Asp-25, Thr-27, Glu-32, Asp-57, Asp-59, Asn-61, Thr-63, Glu-68, Asp-94, Asp-96, Asp-98, Tyr-100, Glu-105, Asp-130, Asp-132, Asp-134, Gln-136, and Glu-141.

The protein belongs to the calmodulin family.

The protein localises to the cytoplasm. Its function is as follows. Calmodulin mediates the control of a large number of enzymes, ion channels and other proteins by Ca(2+). Among the enzymes to be stimulated by the calmodulin-Ca(2+) complex are a number of protein kinases and phosphatases. The sequence is that of Calmodulin from Plasmodium falciparum (isolate 3D7).